Consider the following 251-residue polypeptide: ATP synthase subunit a (251 aa).

6 helical membrane passes run 30 to 50, 86 to 106, 116 to 136, 145 to 165, 195 to 215, and 219 to 239; these read NSNE…VVAL, FFPF…LGLF, IAIT…VGFW, FFSP…IEIV, FMLM…IIPL, and IALT…FAIL.

Belongs to the ATPase A chain family. In terms of assembly, F-type ATPases have 2 components, CF(1) - the catalytic core - and CF(0) - the membrane proton channel. CF(1) has five subunits: alpha(3), beta(3), gamma(1), delta(1), epsilon(1). CF(0) has three main subunits: a(1), b(2) and c(9-12). The alpha and beta chains form an alternating ring which encloses part of the gamma chain. CF(1) is attached to CF(0) by a central stalk formed by the gamma and epsilon chains, while a peripheral stalk is formed by the delta and b chains.

It localises to the cell inner membrane. Functionally, key component of the proton channel; it plays a direct role in the translocation of protons across the membrane. The polypeptide is ATP synthase subunit a (Acidiphilium cryptum (strain JF-5)).